The sequence spans 347 residues: Integrin beta-1-binding protein 2 (347 aa).

C5, C10, C24, and H27 together coordinate Zn(2+). A CHORD 1 domain is found at C5–H64. Residues P28–P31 carry the SH3-binding motif. C42, C43, C59, and H64 together coordinate Zn(2+). An SH3-binding motif is present at residues P70–P78. Zn(2+) is bound by residues C149 and C154. Residues C149 to H208 enclose the CHORD 2 domain. Positions Y158–P161 match the SH2-binding motif. Positions 168 and 171 each coordinate Zn(2+). Residues P172–P175 carry the SH3-binding motif. 4 residues coordinate Zn(2+): C186, C187, C203, and H208. A CS domain is found at P215–E304. Positions Y234–I237 match the SH2-binding motif. A disordered region spans residues L319–E347. Residues E320 to E347 are compositionally biased toward acidic residues.

In terms of assembly, interacts with beta-1 integrin subunit. This interaction is regulated by divalent cations, and it occurs only in absence of calcium. As to expression, expressed in skeletal and cardiac muscles but not in other tissues.

Functionally, may play a role during maturation and/or organization of muscles cells. This chain is Integrin beta-1-binding protein 2 (ITGB1BP2), found in Homo sapiens (Human).